The following is a 326-amino-acid chain: Apoptosis facilitator Bcl-2-like protein 14 (326 aa).

S44 is subject to Phosphoserine. A disordered region spans residues 99 to 127 (TEKEEEPPSSPKEIHAQGPFPVERQGRNQ). Residues 211–225 (IVELLKYSGDQLGRE) carry the BH3 motif. A BH2 motif is present at residues 307–314 (WVQQNGGW).

This sequence belongs to the Bcl-2 family. Post-translationally, phosphorylated by MELK, leading to inhibit its pro-apoptotic function.

The protein localises to the cytoplasm. Functionally, plays a role in apoptosis. In Rattus norvegicus (Rat), this protein is Apoptosis facilitator Bcl-2-like protein 14 (Bcl2l14).